The primary structure comprises 154 residues: TSET complex member tstD (154 aa).

It belongs to the adaptor complexes small subunit family. In terms of assembly, component of the TSET complex, a heterohexamer composed of tstA, tstB, tstC, tstD, tstE and tstF, which may act in plasma membrane turnover. tstA, tstB, tstC and tstD are likely to be the core complex members with tstE and tstF acting as associated scaffold proteins.

It is found in the cell membrane. Its subcellular location is the cytoplasm. This is TSET complex member tstD from Dictyostelium discoideum (Social amoeba).